A 357-amino-acid chain; its full sequence is Holliday junction branch migration complex subunit RuvB (357 aa).

A disordered region spans residues 1-27 (MGRFDDAGAQDAEPDDRDVSPALTVGE). A large ATPase domain (RuvB-L) region spans residues 1 to 195 (MGRFDDAGAQ…FGFTAHMDFY (195 aa)). Residues L34, R35, G76, K79, T80, S81, 142-144 (EDF), R185, Y195, and R232 each bind ATP. T80 lines the Mg(2+) pocket. Positions 196–266 (EPAELERVLA…IAKAALEVYD (71 aa)) are small ATPAse domain (RuvB-S). A head domain (RuvB-H) region spans residues 269–357 (ELGLDRLDRA…TGLGQTGLFD (89 aa)). Residues R324 and R329 each contribute to the DNA site.

It belongs to the RuvB family. As to quaternary structure, homohexamer. Forms an RuvA(8)-RuvB(12)-Holliday junction (HJ) complex. HJ DNA is sandwiched between 2 RuvA tetramers; dsDNA enters through RuvA and exits via RuvB. An RuvB hexamer assembles on each DNA strand where it exits the tetramer. Each RuvB hexamer is contacted by two RuvA subunits (via domain III) on 2 adjacent RuvB subunits; this complex drives branch migration. In the full resolvosome a probable DNA-RuvA(4)-RuvB(12)-RuvC(2) complex forms which resolves the HJ.

It is found in the cytoplasm. The enzyme catalyses ATP + H2O = ADP + phosphate + H(+). Its function is as follows. The RuvA-RuvB-RuvC complex processes Holliday junction (HJ) DNA during genetic recombination and DNA repair, while the RuvA-RuvB complex plays an important role in the rescue of blocked DNA replication forks via replication fork reversal (RFR). RuvA specifically binds to HJ cruciform DNA, conferring on it an open structure. The RuvB hexamer acts as an ATP-dependent pump, pulling dsDNA into and through the RuvAB complex. RuvB forms 2 homohexamers on either side of HJ DNA bound by 1 or 2 RuvA tetramers; 4 subunits per hexamer contact DNA at a time. Coordinated motions by a converter formed by DNA-disengaged RuvB subunits stimulates ATP hydrolysis and nucleotide exchange. Immobilization of the converter enables RuvB to convert the ATP-contained energy into a lever motion, pulling 2 nucleotides of DNA out of the RuvA tetramer per ATP hydrolyzed, thus driving DNA branch migration. The RuvB motors rotate together with the DNA substrate, which together with the progressing nucleotide cycle form the mechanistic basis for DNA recombination by continuous HJ branch migration. Branch migration allows RuvC to scan DNA until it finds its consensus sequence, where it cleaves and resolves cruciform DNA. The protein is Holliday junction branch migration complex subunit RuvB of Mycobacterium sp. (strain JLS).